A 450-amino-acid chain; its full sequence is UDP-N-acetylmuramoylalanine--D-glutamate ligase (450 aa).

119–125 (GSNGKTT) contacts ATP.

The protein belongs to the MurCDEF family.

It is found in the cytoplasm. The enzyme catalyses UDP-N-acetyl-alpha-D-muramoyl-L-alanine + D-glutamate + ATP = UDP-N-acetyl-alpha-D-muramoyl-L-alanyl-D-glutamate + ADP + phosphate + H(+). It functions in the pathway cell wall biogenesis; peptidoglycan biosynthesis. Functionally, cell wall formation. Catalyzes the addition of glutamate to the nucleotide precursor UDP-N-acetylmuramoyl-L-alanine (UMA). The chain is UDP-N-acetylmuramoylalanine--D-glutamate ligase from Streptococcus thermophilus (strain CNRZ 1066).